Reading from the N-terminus, the 214-residue chain is External core antigen (214 aa).

The N-terminal stretch at M1 to A19 is a signal peptide. The segment at G25 to L27 is HBEAG. Residues N165–C214 form a disordered region. Residues V178–S207 are compositionally biased toward basic residues. The stretch at S186–P192 is one 1; half-length repeat. The 3 X 8 AA repeats of S-P-R-R-R-R-S-Q stretch occupies residues S186–Q208. Positions S186–C214 are excised as a propeptide. Tandem repeats lie at residues S193 to Q200 and S201 to Q208.

The protein belongs to the orthohepadnavirus precore antigen family. In terms of assembly, homodimerizes. Phosphorylated. In terms of processing, cleaved by host furin.

The protein localises to the secreted. Its subcellular location is the host nucleus. In terms of biological role, may regulate immune response to the intracellular capsid in acting as a T-cell tolerogen, by having an immunoregulatory effect which prevents destruction of infected cells by cytotoxic T-cells. This immune regulation may predispose to chronicity during perinatal infections and prevent severe liver injury during adult infections. The protein is External core antigen of Hepatitis B virus genotype A2 subtype adw2 (isolate Germany/991/1990) (HBV-A).